The following is a 290-amino-acid chain: MRIADYSVTKAVLDRHGFTFKKSFGQNFLTDTNILQKIVDTAEIDQNVNVIEIGPGIGALTEFLAENAAEVMAFEIDDRLVPILADTLRDFDNVQVVNQDILKADLQTQIKQFKNPDLPIKVVANLPYYITTPILMHLIESKIPFQEFVVMMQREVADRISAEPNTKAYGSLSIAVQYYMTAKVAFIVPRTVFVPAPNVDSAILKMMRRDQPLIEVKDEDFFFRVSRLSFVHRRKTLWNNLTSHFGKSEDIKAKLEKGLALADIKSSIRGEALSIQDFGKLADALKEVGL.

S-adenosyl-L-methionine is bound by residues Asn27, Leu29, Gly54, Glu75, Asp100, and Asn125.

Belongs to the class I-like SAM-binding methyltransferase superfamily. rRNA adenine N(6)-methyltransferase family. RsmA subfamily.

It localises to the cytoplasm. It carries out the reaction adenosine(1518)/adenosine(1519) in 16S rRNA + 4 S-adenosyl-L-methionine = N(6)-dimethyladenosine(1518)/N(6)-dimethyladenosine(1519) in 16S rRNA + 4 S-adenosyl-L-homocysteine + 4 H(+). Functionally, specifically dimethylates two adjacent adenosines (A1518 and A1519) in the loop of a conserved hairpin near the 3'-end of 16S rRNA in the 30S particle. May play a critical role in biogenesis of 30S subunits. In Streptococcus pyogenes serotype M3 (strain ATCC BAA-595 / MGAS315), this protein is Ribosomal RNA small subunit methyltransferase A.